A 153-amino-acid chain; its full sequence is AEEAPRRVKLSQRQMQELKEAFTMIDQDRDGFIGMEDLKDMFSSLGRVPPDDELNAMLKECPGQLNFTAFLTLFGEKVSGTDPEDALRNAFSMFDEDGQGFIPEDYLKDLLENMGDNFSKEEIKNVWKDAPLKNKQFNYNKMVDIKGKAEDED.

Ala1 carries the blocked amino end (Ala) modification. EF-hand domains follow at residues 13–48 (RQMQ…LGRV) and 82–117 (DPED…MGDN). The Ca(2+) site is built by Asp26, Asp28, Asp30, and Asp37.

In terms of biological role, in molluscan muscle, calcium regulation is associated with myosin rather than with actin. Muscle myosin contains two types of light chains: the catalytic light chain, essential for ATPase activity, and the regulatory light chain, a calcium-binding protein responsible for Ca(2+) dependent binding and Ca(2+) dependent Mg-ATPase activity. The polypeptide is Myosin regulatory light chain LC-2, mantle muscle (Todarodes pacificus (Japanese flying squid)).